A 238-amino-acid chain; its full sequence is Adenylate dimethylallyltransferase (238 aa).

It belongs to the isopentenyl transferase family.

The catalysed reaction is dimethylallyl diphosphate + AMP = N(6)-(dimethylallyl)adenosine 5'-phosphate + diphosphate. In terms of biological role, transfers dimethylallyl groups to AMP as part of the biosynthesis of cytokinin phytohormones. The protein is Adenylate dimethylallyltransferase (tzs) of Ralstonia nicotianae (strain ATCC BAA-1114 / GMI1000) (Ralstonia solanacearum).